The sequence spans 241 residues: Demethylmenaquinone methyltransferase (241 aa).

S-adenosyl-L-methionine-binding positions include T60, D81, and 106 to 107 (DA).

Belongs to the class I-like SAM-binding methyltransferase superfamily. MenG/UbiE family.

The enzyme catalyses a 2-demethylmenaquinol + S-adenosyl-L-methionine = a menaquinol + S-adenosyl-L-homocysteine + H(+). It functions in the pathway quinol/quinone metabolism; menaquinone biosynthesis; menaquinol from 1,4-dihydroxy-2-naphthoate: step 2/2. Methyltransferase required for the conversion of demethylmenaquinol (DMKH2) to menaquinol (MKH2). The polypeptide is Demethylmenaquinone methyltransferase (Staphylococcus aureus (strain Mu3 / ATCC 700698)).